Here is a 405-residue protein sequence, read N- to C-terminus: GTPase Obg (405 aa).

The Obg domain occupies 1–159; that stretch reads MRFIDEAVVT…KVLKFELKVV (159 aa). Residues 160 to 333 form the OBG-type G domain; sequence ADVGLIGLPN…IKYHLMNEIE (174 aa). GTP contacts are provided by residues 166–173, 191–195, 213–216, 283–286, and 314–316; these read GLPNAGKS, FTTLV, DIPG, NKID, and ATL. 2 residues coordinate Mg(2+): Ser173 and Thr193. Residues 371–382 are compositionally biased toward basic and acidic residues; that stretch reads YRAARKAAREGT. The tract at residues 371 to 405 is disordered; that stretch reads YRAARKAAREGTDLSDDDFDGSDDDDDGVEVIYAP. Acidic residues predominate over residues 383-399; the sequence is DLSDDDFDGSDDDDDGV.

The protein belongs to the TRAFAC class OBG-HflX-like GTPase superfamily. OBG GTPase family. Monomer. Mg(2+) serves as cofactor.

The protein resides in the cytoplasm. In terms of biological role, an essential GTPase which binds GTP, GDP and possibly (p)ppGpp with moderate affinity, with high nucleotide exchange rates and a fairly low GTP hydrolysis rate. Plays a role in control of the cell cycle, stress response, ribosome biogenesis and in those bacteria that undergo differentiation, in morphogenesis control. In Psychrobacter arcticus (strain DSM 17307 / VKM B-2377 / 273-4), this protein is GTPase Obg.